A 95-amino-acid polypeptide reads, in one-letter code: Pyrimidine/purine nucleoside phosphorylase (95 aa).

This sequence belongs to the nucleoside phosphorylase PpnP family.

It catalyses the reaction a purine D-ribonucleoside + phosphate = a purine nucleobase + alpha-D-ribose 1-phosphate. It carries out the reaction adenosine + phosphate = alpha-D-ribose 1-phosphate + adenine. The catalysed reaction is cytidine + phosphate = cytosine + alpha-D-ribose 1-phosphate. The enzyme catalyses guanosine + phosphate = alpha-D-ribose 1-phosphate + guanine. It catalyses the reaction inosine + phosphate = alpha-D-ribose 1-phosphate + hypoxanthine. It carries out the reaction thymidine + phosphate = 2-deoxy-alpha-D-ribose 1-phosphate + thymine. The catalysed reaction is uridine + phosphate = alpha-D-ribose 1-phosphate + uracil. The enzyme catalyses xanthosine + phosphate = alpha-D-ribose 1-phosphate + xanthine. Functionally, catalyzes the phosphorolysis of diverse nucleosides, yielding D-ribose 1-phosphate and the respective free bases. Can use uridine, adenosine, guanosine, cytidine, thymidine, inosine and xanthosine as substrates. Also catalyzes the reverse reactions. The sequence is that of Pyrimidine/purine nucleoside phosphorylase from Yersinia pestis bv. Antiqua (strain Antiqua).